We begin with the raw amino-acid sequence, 557 residues long: 2-succinyl-5-enolpyruvyl-6-hydroxy-3-cyclohexene-1-carboxylate synthase (557 aa).

Belongs to the TPP enzyme family. MenD subfamily. Homodimer. The cofactor is Mg(2+). Requires Mn(2+) as cofactor. Thiamine diphosphate serves as cofactor.

It carries out the reaction isochorismate + 2-oxoglutarate + H(+) = 5-enolpyruvoyl-6-hydroxy-2-succinyl-cyclohex-3-ene-1-carboxylate + CO2. It functions in the pathway quinol/quinone metabolism; 1,4-dihydroxy-2-naphthoate biosynthesis; 1,4-dihydroxy-2-naphthoate from chorismate: step 2/7. Its pathway is quinol/quinone metabolism; menaquinone biosynthesis. Its function is as follows. Catalyzes the thiamine diphosphate-dependent decarboxylation of 2-oxoglutarate and the subsequent addition of the resulting succinic semialdehyde-thiamine pyrophosphate anion to isochorismate to yield 2-succinyl-5-enolpyruvyl-6-hydroxy-3-cyclohexene-1-carboxylate (SEPHCHC). In Staphylococcus aureus (strain MRSA252), this protein is 2-succinyl-5-enolpyruvyl-6-hydroxy-3-cyclohexene-1-carboxylate synthase.